The primary structure comprises 335 residues: Adenosine deaminase (335 aa).

2 residues coordinate Zn(2+): His-12 and His-14. 2 residues coordinate substrate: His-14 and Asp-16. Position 197 (His-197) interacts with Zn(2+). Residue Glu-200 is the Proton donor of the active site. Asp-278 contacts Zn(2+).

The protein belongs to the metallo-dependent hydrolases superfamily. Adenosine and AMP deaminases family. Adenosine deaminase subfamily. Zn(2+) serves as cofactor.

The catalysed reaction is adenosine + H2O + H(+) = inosine + NH4(+). It catalyses the reaction 2'-deoxyadenosine + H2O + H(+) = 2'-deoxyinosine + NH4(+). Its function is as follows. Catalyzes the hydrolytic deamination of adenosine and 2-deoxyadenosine. This chain is Adenosine deaminase, found in Clostridium botulinum (strain Okra / Type B1).